Here is a 123-residue protein sequence, read N- to C-terminus: Thioredoxin domain-containing protein 17 (123 aa).

An N-acetylalanine modification is found at A2. The Thioredoxin domain maps to 41 to 123 (SWCPDCVEAE…SLVEMIFSED (83 aa)). Active-site nucleophile residues include C43 and C46. Residues C43 and C46 are joined by a disulfide bond.

The protein belongs to the thioredoxin family. In terms of assembly, interacts with TRXR1 and DYNLL1/DNCL1. Post-translationally, the oxidized protein is reduced by TRXR1.

The protein localises to the cytoplasm. Its function is as follows. Disulfide reductase. May participate in various redox reactions through the reversible oxidation of its active center dithiol to a disulfide and catalyze dithiol-disulfide exchange reactions. Modulates TNF-alpha signaling and NF-kappa-B activation. Has peroxidase activity and may contribute to the elimination of cellular hydrogen peroxide. The sequence is that of Thioredoxin domain-containing protein 17 (Txndc17) from Mus musculus (Mouse).